The following is a 212-amino-acid chain: Large ribosomal subunit protein uL3 (212 aa).

Over residues L139–P153 the composition is skewed to polar residues. The segment at L139 to K161 is disordered. N5-methylglutamine is present on Q151.

The protein belongs to the universal ribosomal protein uL3 family. Part of the 50S ribosomal subunit. Forms a cluster with proteins L14 and L19. Methylated by PrmB.

Functionally, one of the primary rRNA binding proteins, it binds directly near the 3'-end of the 23S rRNA, where it nucleates assembly of the 50S subunit. The protein is Large ribosomal subunit protein uL3 of Baumannia cicadellinicola subsp. Homalodisca coagulata.